The following is a 1364-amino-acid chain: ABC-type transporter cns4 (1364 aa).

In terms of domain architecture, ABC transporter 1 spans 42–290 (SRVKESRAKP…MEEMGFLYTD (249 aa)). N-linked (GlcNAc...) asparagine glycans are attached at residues Asn152 and Asn214. The next 5 helical transmembrane spans lie at 435-455 (LFFA…GSFA), 483-503 (IPLI…MTGL), 508-528 (EAFL…TALF), 540-560 (AAIK…GFLI), and 567-587 (PWLG…AVLS). A glycan (N-linked (GlcNAc...) asparagine) is linked at Asn610. Residues 650-670 (FAIVWVWWALFVILTVYFTSN) traverse the membrane as a helical segment. N-linked (GlcNAc...) asparagine glycosylation is found at Asn689, Asn711, and Asn739. Positions 697–732 (DEEVGSGPDSHDSRNRSGISPIGDKQETSTDGPSKI) are disordered. The ABC transporter 2 domain maps to 737–985 (IRNTSVFTWK…TVNEYFGRNG (249 aa)). 779-786 (GSSGAGKT) lines the ATP pocket. 6 consecutive transmembrane segments (helical) span residues 1076-1094 (LMLH…WKIG), 1105-1125 (FTIF…QPLF), 1146-1166 (AFAT…AVVY), 1185-1205 (AVFF…QAIA), 1211-1231 (AIFA…FCGV), and 1245-1265 (WLYY…FTTF).

It belongs to the ABC transporter superfamily. ABCG family. PDR (TC 3.A.1.205) subfamily.

It is found in the cell membrane. ABC-type transporter; part of the gene cluster that mediates the biosynthesis of cordycepin (COR) and pentostatin (PTN), two adenosine analogs with related bioactivity profiles as both mimic adenosine and can inhibit some of the processes that are adenosine dependent. Mediates the pumping of pentostatin but not of cordycepin out of fungal cells. Decreasing intracellular pentostatin releases adenosine deaminase (ADA) inhibition, allowing ADA to deaminate cordycepin into non-toxic 3'-d. The polypeptide is ABC-type transporter cns4 (Cordyceps militaris (strain CM01) (Caterpillar fungus)).